A 93-amino-acid polypeptide reads, in one-letter code: Large ribosomal subunit protein bL31 (93 aa).

The segment at 72 to 93 is disordered; sequence VKTVSSNADNQKETTEELIKNK. Residues 81 to 93 show a composition bias toward basic and acidic residues; that stretch reads NQKETTEELIKNK.

Belongs to the bacterial ribosomal protein bL31 family. Type A subfamily. In terms of assembly, part of the 50S ribosomal subunit.

Its function is as follows. Binds the 23S rRNA. This Onion yellows phytoplasma (strain OY-M) protein is Large ribosomal subunit protein bL31.